Here is a 396-residue protein sequence, read N- to C-terminus: 3-amino-4-hydroxybenzoate 2-monooxygenase PtmB3 (396 aa).

FAD contacts are provided by residues Ala19, 38–39 (EQ), and Arg112. Tyr217 acts as the Proton acceptor in catalysis. Asp295 contributes to the FAD binding site. The disordered stretch occupies residues 352-371 (RERGHEFHLPDGPQQRLRDR).

The protein belongs to the 6-hydroxynicotinate 3-monooxygenase family. Requires FAD as cofactor.

The enzyme catalyses 3-amino-4-hydroxybenzoate + NADPH + O2 + H(+) = 3-amino-2,4-dihydroxybenzoate + NADP(+) + H2O. It functions in the pathway antibiotic biosynthesis. Part of a gene cluster involved in the biosynthesis of thioplatensimycin (thioPTM) and platensimycin (PTM), potent and selective inhibitors of bacterial and mammalian fatty acid synthases. Catalyzes the hydroxylation of 3-amino-4-hydroxybenzoate (3,4-AHBA) to 3-amino-2,4-dihydroxybenzoate (3,2,4-ADHBA). The sequence is that of 3-amino-4-hydroxybenzoate 2-monooxygenase PtmB3 from Streptomyces platensis.